The primary structure comprises 37 residues: Cytochrome b6-f complex subunit 7 (37 aa).

A helical transmembrane segment spans residues 5–25 (IFGTAFLFIVLVPVGLALGAF).

The protein belongs to the PetM family. The 4 large subunits of the cytochrome b6-f complex are cytochrome b6, subunit IV (17 kDa polypeptide, PetD), cytochrome f and the Rieske protein, while the 4 small subunits are PetG, PetL, PetM and PetN. The complex functions as a dimer.

It localises to the cellular thylakoid membrane. Component of the cytochrome b6-f complex, which mediates electron transfer between photosystem II (PSII) and photosystem I (PSI), cyclic electron flow around PSI, and state transitions. The sequence is that of Cytochrome b6-f complex subunit 7 from Synechococcus elongatus (strain ATCC 33912 / PCC 7942 / FACHB-805) (Anacystis nidulans R2).